The chain runs to 141 residues: Large ribosomal subunit protein uL11 (141 aa).

This sequence belongs to the universal ribosomal protein uL11 family. Part of the ribosomal stalk of the 50S ribosomal subunit. Interacts with L10 and the large rRNA to form the base of the stalk. L10 forms an elongated spine to which L12 dimers bind in a sequential fashion forming a multimeric L10(L12)X complex. In terms of processing, one or more lysine residues are methylated.

In terms of biological role, forms part of the ribosomal stalk which helps the ribosome interact with GTP-bound translation factors. This is Large ribosomal subunit protein uL11 from Coprothermobacter proteolyticus (strain ATCC 35245 / DSM 5265 / OCM 4 / BT).